The chain runs to 368 residues: 4-hydroxy-3-methylbut-2-en-1-yl diphosphate synthase (flavodoxin) (368 aa).

Positions 271, 274, 306, and 313 each coordinate [4Fe-4S] cluster.

This sequence belongs to the IspG family. [4Fe-4S] cluster serves as cofactor.

It carries out the reaction (2E)-4-hydroxy-3-methylbut-2-enyl diphosphate + oxidized [flavodoxin] + H2O + 2 H(+) = 2-C-methyl-D-erythritol 2,4-cyclic diphosphate + reduced [flavodoxin]. Its pathway is isoprenoid biosynthesis; isopentenyl diphosphate biosynthesis via DXP pathway; isopentenyl diphosphate from 1-deoxy-D-xylulose 5-phosphate: step 5/6. In terms of biological role, converts 2C-methyl-D-erythritol 2,4-cyclodiphosphate (ME-2,4cPP) into 1-hydroxy-2-methyl-2-(E)-butenyl 4-diphosphate. This Histophilus somni (strain 129Pt) (Haemophilus somnus) protein is 4-hydroxy-3-methylbut-2-en-1-yl diphosphate synthase (flavodoxin).